We begin with the raw amino-acid sequence, 1366 residues long: MTSSKPKKTSRVRKTTKNSKKNNPVTMPVLPKTPPSFKNKVVDKKALKNLVSWAYKTHGTAITSAMADNLKDLGFKYATQAAVSISVDDLKVPEAKQDLIGQAEEQISATEECYRLGEITEVERHTKVIDTWTETNERLVDAVKNNFNQNDPLNSVWMMANSGARGNMSQVRQLVGMRGLMANPQGEIIDLPIRTNFREGLTVTEYVISSYGARKGLVDTALRTADSGYLTRRLVDVAQDVIVREEDCGTELSIVVEAEDGKFGARLLGRLTAEDIFDAEENIVVSQNTAIDPSLSEEIEKASINKVKIRSPLTCEANRSVCRRCYGWALAHNHLVDLGEAVGIIAAQSIGEPGTQLTMRTFHTGGVSTAESGVVRSRISGKVEFSSKAKVRGYRTPHGVEAKQAEVDFTLKIVPQSNNSGKAQKIEVSSGSLLFVDDGEEINSDITVAQITAGAVKKSVEKATKDVICDLAGQVRYDKVIQPKEVTDRQGNITLKAQRLGRLWVLAGDVYNLPPNARPVISSGKNVDEGTVLAEASQSSEFGGQVRLRESIGDSREVQIVTTSMSLTNFKLIEESTHSGQIYNLESSDGTSYRLNISPGSKINSGEVIADLTDERFRTKTGGLIKYAPGLSVKKARSSKNGFEVSQGGTLLWIPQETHEINKDISLLMIEDMKWIEAGTEVVKDIFSQTSGIVTVTQKNDILREITVRNGNFYECDDEEVLNRFTEEGNLVNPGEKILDGVDNTEILFVQKLETSKCRGLLLRTVEEFTIPDQAELPQLSHVKQEKGPHLGLKAIQRLTYKDGELIKSVEGVELLRTHLSIESFDATPQMTIDVESIKDDKDESINRLNLVILESILVRRDTVSDASHGSTHTELQVNNNQLVKAGDVIATTQILCKEKGLVQLPNVVDDEPIRRLIVEREQDKIKVKISDKAVVKVGDRVVDGDPITKTVKSTSCGEIEEISNSSVTLRLGRPYMVSPDSVLHVKDGDLVLRGDGLALLVFERQKTGDIVQGLPRIEELLEARRPRDSATLCKKSGIVQIKKGNDEESVSLSVIEKDDLVNEYQLLIGKNIMVSDGQQVTGGESLTDGPINPHELLDCYFNDLKDQKPLIDAARESISKLQRSMVSEVQNVYKSQGVAIDDKHIEVIVRQMTSKVRIEDAGDTTLLPGELIELRQVEDTNQAMAITGGAPAEFTPVLLGITKASLNTDSFISAASFQETTRVLTEAAIEGKSDWLRGLKENVIIGRLIPAGTGFSGFVEELSSEAGPHPDILAEESGGYRRAQNLRPDYTVDMPQSPAVSSTAILDDPSDEDLETTRNRHGIDPSSSNFAAFARPNAENQFSEDQLPDPAALEGLQEEGLLSDE.

Over residues 1-20 (MTSSKPKKTSRVRKTTKNSK) the composition is skewed to basic residues. Residues 1–37 (MTSSKPKKTSRVRKTTKNSKKNNPVTMPVLPKTPPSF) form a disordered region. Residues cysteine 248, cysteine 315, cysteine 322, and cysteine 325 each contribute to the Zn(2+) site. The interval 1292–1366 (TVDMPQSPAV…LQEEGLLSDE (75 aa)) is disordered. Over residues 1354–1366 (LEGLQEEGLLSDE) the composition is skewed to low complexity.

This sequence belongs to the RNA polymerase beta' chain family. RpoC2 subfamily. In terms of assembly, in cyanobacteria the RNAP catalytic core is composed of 2 alpha, 1 beta, 1 beta', 1 gamma and 1 omega subunit. When a sigma factor is associated with the core the holoenzyme is formed, which can initiate transcription. It depends on Zn(2+) as a cofactor.

The catalysed reaction is RNA(n) + a ribonucleoside 5'-triphosphate = RNA(n+1) + diphosphate. DNA-dependent RNA polymerase catalyzes the transcription of DNA into RNA using the four ribonucleoside triphosphates as substrates. The chain is DNA-directed RNA polymerase subunit beta' from Prochlorococcus marinus (strain MIT 9215).